The primary structure comprises 131 residues: Holo-[acyl-carrier-protein] synthase (131 aa).

Positions 8 and 63 each coordinate Mg(2+).

Belongs to the P-Pant transferase superfamily. AcpS family. It depends on Mg(2+) as a cofactor.

The protein resides in the cytoplasm. The catalysed reaction is apo-[ACP] + CoA = holo-[ACP] + adenosine 3',5'-bisphosphate + H(+). Functionally, transfers the 4'-phosphopantetheine moiety from coenzyme A to a Ser of acyl-carrier-protein. The protein is Holo-[acyl-carrier-protein] synthase of Shewanella piezotolerans (strain WP3 / JCM 13877).